A 355-amino-acid chain; its full sequence is Peptide chain release factor 1 (355 aa).

Gln-233 is modified (N5-methylglutamine). The span at 283 to 293 (EKNKDRADARK) shows a compositional bias: basic and acidic residues. Positions 283–304 (EKNKDRADARKSQVGTGDRSER) are disordered.

The protein belongs to the prokaryotic/mitochondrial release factor family. Methylated by PrmC. Methylation increases the termination efficiency of RF1.

Its subcellular location is the cytoplasm. In terms of biological role, peptide chain release factor 1 directs the termination of translation in response to the peptide chain termination codons UAG and UAA. The polypeptide is Peptide chain release factor 1 (Finegoldia magna (strain ATCC 29328 / DSM 20472 / WAL 2508) (Peptostreptococcus magnus)).